We begin with the raw amino-acid sequence, 397 residues long: Teichoic acid D-alanine hydrolase (397 aa).

Residues 1 to 23 (MKFNKVKLVIHACVLLFIIISIA) form the signal peptide.

The protein resides in the cell membrane. The catalysed reaction is [(4-D-Ala)-(2-GlcNAc)-Rib-ol-P]n-[Gro-P]m-beta-D-ManNAc-(1-&gt;4)-alpha-D-GlcNAc-P-peptidoglycan + n H2O = [(2-GlcNAc)-Rib-ol-P]n-[Gro-P]m-beta-D-ManNAc-(1-&gt;4)-alpha-D-GlcNAc-P-peptidoglycan + n D-alanine.. Catalyzes the liberation of D-alanyl moieties present on wall teichoic acid (WTA) and lipoteichoic acid (LTA). Affects the methicillin resistance level and autolysis in the presence of Triton X-100 as well as the cell wall structure. In Staphylococcus aureus (strain Mu50 / ATCC 700699), this protein is Teichoic acid D-alanine hydrolase (fmtA).